Here is a 514-residue protein sequence, read N- to C-terminus: 2-isopropylmalate synthase (514 aa).

The 264-residue stretch at 5–268 (LIIFDTTLRD…DVGIDTSQIV (264 aa)) folds into the Pyruvate carboxyltransferase domain. Residues Asp14, His202, His204, and Asn239 each coordinate Mn(2+). Residues 395–514 (KFVSLSQRSE…KDDKVNPQRS (120 aa)) are regulatory domain.

The protein belongs to the alpha-IPM synthase/homocitrate synthase family. LeuA type 1 subfamily. Homodimer. Mn(2+) serves as cofactor.

Its subcellular location is the cytoplasm. It catalyses the reaction 3-methyl-2-oxobutanoate + acetyl-CoA + H2O = (2S)-2-isopropylmalate + CoA + H(+). The protein operates within amino-acid biosynthesis; L-leucine biosynthesis; L-leucine from 3-methyl-2-oxobutanoate: step 1/4. Catalyzes the condensation of the acetyl group of acetyl-CoA with 3-methyl-2-oxobutanoate (2-ketoisovalerate) to form 3-carboxy-3-hydroxy-4-methylpentanoate (2-isopropylmalate). This chain is 2-isopropylmalate synthase, found in Burkholderia cenocepacia (strain ATCC BAA-245 / DSM 16553 / LMG 16656 / NCTC 13227 / J2315 / CF5610) (Burkholderia cepacia (strain J2315)).